We begin with the raw amino-acid sequence, 467 residues long: E3 ubiquitin-protein ligase TRIM11 (467 aa).

The segment at 16–57 adopts an RING-type zinc-finger fold; that stretch reads CAICLDYFTDPVMTDCGHNFCRECIRRCWGQPEGPYACPECR. The residue at position 85 (Ser85) is a Phosphoserine. A B box-type zinc finger spans residues 87-127; sequence VPQGVCAAHREPLTTFCGDDLSLLCPTCERSEHWAHRVRPL. Residues Cys92, His95, Cys114, and His119 each contribute to the Zn(2+) site. The stretch at 127–207 forms a coiled coil; sequence LQEAADDLKG…KLEEEELEVL (81 aa). The 194-residue stretch at 267 to 460 folds into the B30.2/SPRY domain; sequence ELRTVCRVPG…MTICRLIGVS (194 aa). Over residues 304-313 the composition is skewed to basic and acidic residues; it reads DRRSVQRGEQ. Positions 304–325 are disordered; sequence DRRSVQRGEQRQALPDSPERFD.

Belongs to the TRIM/RBCC family. In terms of assembly, binds cytoplasmic tail of integrin alpha-1. Interacts with the HN peptide. Interacts with PHOX2B. Interacts (when autoubiquitinated) with SQSTM1/p62; promoting AIM2 recruitment to autophagosomes. Interacts with AIM2; promoting its autophagy-dependent degradation. Autoubiquitinated upon DNA stimulation; autoubiquitination promotes interaction with SQSTM1/p62 and recruitment of AIM2 to autophagosomes.

It is found in the cytoplasm. The protein resides in the nucleus. The catalysed reaction is S-ubiquitinyl-[E2 ubiquitin-conjugating enzyme]-L-cysteine + [acceptor protein]-L-lysine = [E2 ubiquitin-conjugating enzyme]-L-cysteine + N(6)-ubiquitinyl-[acceptor protein]-L-lysine.. It participates in protein modification; protein ubiquitination. E3 ubiquitin-protein ligase that promotes the degradation of insoluble ubiquitinated proteins, including insoluble PAX6, poly-Gln repeat expanded HTT and poly-Ala repeat expanded ARX. Mediates PAX6 ubiquitination leading to proteasomal degradation, thereby modulating cortical neurogenesis. May also inhibit PAX6 transcriptional activity, possibly in part by preventing the binding of PAX6 to its consensus sequences. May contribute to the regulation of the intracellular level of HN (humanin) or HN-containing proteins through the proteasomal degradation pathway. Mediates MED15 ubiquitination leading to proteasomal degradation. May contribute to the innate restriction of retroviruses. Upon overexpression, reduces HIV-1 and murine leukemia virus infectivity, by suppressing viral gene expression. Antiviral activity depends on a functional E3 ubiquitin-protein ligase domain. May regulate TRIM5 turnover via the proteasome pathway, thus counteracting the TRIM5-mediated cross-species restriction of retroviral infection at early stages of the retroviral life cycle. Acts as an inhibitor of the AIM2 inflammasome by promoting autophagy-dependent degradation of AIM2. Mechanistically, undergoes autoubiquitination upon DNA stimulation, promoting interaction with AIM2 and SQSTM1/p62, leading to AIM2 recruitment to autophagosomes. The polypeptide is E3 ubiquitin-protein ligase TRIM11 (Trim11) (Rattus norvegicus (Rat)).